We begin with the raw amino-acid sequence, 408 residues long: Arginine biosynthesis bifunctional protein ArgJ (408 aa).

Residues Thr-158, Lys-184, Thr-195, Glu-281, Asn-403, and Thr-408 each contribute to the substrate site. Thr-195 (nucleophile) is an active-site residue.

The protein belongs to the ArgJ family. In terms of assembly, heterotetramer of two alpha and two beta chains.

It localises to the cytoplasm. The enzyme catalyses N(2)-acetyl-L-ornithine + L-glutamate = N-acetyl-L-glutamate + L-ornithine. The catalysed reaction is L-glutamate + acetyl-CoA = N-acetyl-L-glutamate + CoA + H(+). The protein operates within amino-acid biosynthesis; L-arginine biosynthesis; L-ornithine and N-acetyl-L-glutamate from L-glutamate and N(2)-acetyl-L-ornithine (cyclic): step 1/1. It functions in the pathway amino-acid biosynthesis; L-arginine biosynthesis; N(2)-acetyl-L-ornithine from L-glutamate: step 1/4. Its function is as follows. Catalyzes two activities which are involved in the cyclic version of arginine biosynthesis: the synthesis of N-acetylglutamate from glutamate and acetyl-CoA as the acetyl donor, and of ornithine by transacetylation between N(2)-acetylornithine and glutamate. This Bacillus thuringiensis subsp. konkukian (strain 97-27) protein is Arginine biosynthesis bifunctional protein ArgJ.